Reading from the N-terminus, the 296-residue chain is MLIIDGKKVSIDLKSELKVRVDEHRAATGKVPGLTVIIVGEDPASQVYVRNKAKSCKETGMHSSVIEMDASTSEEALLSRIRELNDDPDVHGILVQQPLPKQIDEFAVTLAIDPAKDVDGFHPENLGRLVMGHLDKCFVSCTPYGILELLGRYNIETKGKHCVVVGRSNIVGKPMANLMLQKLDATNCTVTICHSATKDIPSYTRQADILIAAIGKAGFITADMVKPGAVVIDVGINRIDDPSTKSGSRLAGDVDYEGVSAIASAMTPVPGGVGPMTIAMLLKNTLQSFERANNLQ.

NADP(+) is bound by residues Gly166 to Ser168, Ser195, and Ile236.

Belongs to the tetrahydrofolate dehydrogenase/cyclohydrolase family. In terms of assembly, homodimer.

The catalysed reaction is (6R)-5,10-methylene-5,6,7,8-tetrahydrofolate + NADP(+) = (6R)-5,10-methenyltetrahydrofolate + NADPH. It carries out the reaction (6R)-5,10-methenyltetrahydrofolate + H2O = (6R)-10-formyltetrahydrofolate + H(+). It participates in one-carbon metabolism; tetrahydrofolate interconversion. Its function is as follows. Catalyzes the oxidation of 5,10-methylenetetrahydrofolate to 5,10-methenyltetrahydrofolate and then the hydrolysis of 5,10-methenyltetrahydrofolate to 10-formyltetrahydrofolate. This Chlorobium limicola (strain DSM 245 / NBRC 103803 / 6330) protein is Bifunctional protein FolD.